A 554-amino-acid chain; its full sequence is MTSSRKVRPTKHIFVTGGVVSSLGKGLTAASLGQLLIARGLSVTMQKLDPYLNVDPGTMNPFEHGEVFVTEDGAETDLDLGHYERFLDRNLGLNANVTTGKVYSTVIAKERRGEYLGKTVQVIPHITDEIKARILSMGEPDAHGNAPDVVISEVGGTVGDIESQPFLEAARQVRHEIGRENCFFIHCSLVPYLATSGELKTKPTQHSVAELRGIGILPDALVLRCDREVPQGLKDKIAMMCDVDYEGVVSCPDSSSIYNIPDVLYREHLDTFIIRRLGLPFRDVDWSTWHDLLERVNNPRHELTVGIVGKYIDLPDAYLSVVEAVRAAGYANWTRTNIKWITSDDCETPSGAMKALSGLDAIVVPGGFGIRGIEGKIGAITFAREHKIPLLGLCLGLQCTVIEAARQAGLEQASSTEFDPAATQPVIATMEEQKAAVSGEADLGGTMRLGAYPATLEEGSLVAELYGTTEVSERHRHRYEVNNAYRAQIAEGSDLVFSGTSPDGHLVEFVEYPKEVHPYLVATQAHPEYKSRPTHAHPLFYGLVKTALELRVHP.

Residues 1-279 (MTSSRKVRPT…DTFIIRRLGL (279 aa)) form an amidoligase domain region. A CTP-binding site is contributed by serine 21. A UTP-binding site is contributed by serine 21. ATP contacts are provided by residues 22-27 (SLGKGL) and aspartate 79. 2 residues coordinate Mg(2+): aspartate 79 and glutamate 153. CTP contacts are provided by residues 160–162 (DIE), 200–205 (KTKPTQ), and lysine 236. Residues 200–205 (KTKPTQ) and lysine 236 each bind UTP. The Glutamine amidotransferase type-1 domain occupies 304-553 (TVGIVGKYID…VKTALELRVH (250 aa)). Residue glycine 367 coordinates L-glutamine. Catalysis depends on cysteine 394, which acts as the Nucleophile; for glutamine hydrolysis. Residues 395 to 398 (LGLQ), glutamate 417, and arginine 478 each bind L-glutamine. Catalysis depends on residues histidine 526 and glutamate 528.

It belongs to the CTP synthase family. Homotetramer.

The enzyme catalyses UTP + L-glutamine + ATP + H2O = CTP + L-glutamate + ADP + phosphate + 2 H(+). It catalyses the reaction L-glutamine + H2O = L-glutamate + NH4(+). It carries out the reaction UTP + NH4(+) + ATP = CTP + ADP + phosphate + 2 H(+). It participates in pyrimidine metabolism; CTP biosynthesis via de novo pathway; CTP from UDP: step 2/2. Its activity is regulated as follows. Allosterically activated by GTP, when glutamine is the substrate; GTP has no effect on the reaction when ammonia is the substrate. The allosteric effector GTP functions by stabilizing the protein conformation that binds the tetrahedral intermediate(s) formed during glutamine hydrolysis. Inhibited by the product CTP, via allosteric rather than competitive inhibition. In terms of biological role, catalyzes the ATP-dependent amination of UTP to CTP with either L-glutamine or ammonia as the source of nitrogen. Regulates intracellular CTP levels through interactions with the four ribonucleotide triphosphates. The chain is CTP synthase from Corynebacterium glutamicum (strain R).